A 453-amino-acid chain; its full sequence is UDP-N-acetylmuramate--L-alanyl-gamma-D-glutamyl-meso-2,6-diaminoheptandioate ligase (453 aa).

111–117 (GTHGKTT) contributes to the ATP binding site.

Belongs to the MurCDEF family. Mpl subfamily. Mg(2+) serves as cofactor.

The catalysed reaction is UDP-N-acetyl-alpha-D-muramate + L-alanyl-gamma-D-glutamyl-meso-2,6-diaminopimelate + ATP = UDP-N-acetyl-alpha-D-muramoyl-L-alanyl-gamma-D-glutamyl-meso-2,6-diaminopimelate + ADP + phosphate + H(+). It participates in cell wall biogenesis; peptidoglycan recycling. Functionally, reutilizes the intact tripeptide L-alanyl-gamma-D-glutamyl-meso-diaminopimelate by linking it to UDP-N-acetylmuramate. The sequence is that of UDP-N-acetylmuramate--L-alanyl-gamma-D-glutamyl-meso-2,6-diaminoheptandioate ligase from Haemophilus influenzae (strain ATCC 51907 / DSM 11121 / KW20 / Rd).